The following is a 353-amino-acid chain: MERLLNQLNLGVLPYITTKDIEDRLRDKIVAKAKLAFIKDCFEAVVCENGGLFVLTGGAAVTCHIDDDRSALKCIDFDYYGFCAKMFCNLQTNLQKCVDQHYAELDVLTRQVYMSDPLVVLKCYQNGAYRLNGQINLHLNRHIKCIKTQYNDEFDLVRFALQIDITSADGVDEYTDNGVKITTAPLSFNVFFVNVRIMKRPFNADRCIKNFSLFGNEYHVLVSSLQRVLNDQLMCLLKDIFTNKFDYKIERRLKHLKRLFANLPAESYNSCVNDHTDMCLYKEQNETITNFVKKILDISGPALGCRKLMHIYLTTDTFSGQLPAYLTHYVNYPHKSLCDQNWKRFMSCIFSLY.

It is found in the host nucleus. The protein localises to the host cytoplasm. May play a role in occlusion-derived virions (ODV) formation and/or regulation of late viral gene expression. This is Protein AC18 (DA41) from Autographa californica nuclear polyhedrosis virus (AcMNPV).